Here is a 559-residue protein sequence, read N- to C-terminus: Pentatricopeptide repeat-containing protein At1g08610 (559 aa).

13 PPR repeats span residues 103–137 (DEETNNEILHNLCSNGKLTDACKLVEVMARHNQVP), 138–172 (HFPSCSNLVRGLARIDQLDKAMCILRVMVMSGGVP), 173–207 (DTITYNMIIGNLCKKGHIRTALVLLEDMSLSGSPP), 208–242 (DVITYNTVIRCMFDYGNAEQAIRFWKDQLQNGCPP), 243–277 (FMITYTVLVELVCRYCGSARAIEVLEDMAVEGCYP), 278–312 (DIVTYNSLVNYNCRRGNLEEVASVIQHILSHGLEL), 313–347 (NTVTYNTLLHSLCSHEYWDEVEEILNIMYQTSYCP), 348–382 (TVITYNILINGLCKARLLSRAIDFFYQMLEQKCLP), 383–417 (DIVTYNTVLGAMSKEGMVDDAIELLGLLKNTCCPP), 418–452 (GLITYNSVIDGLAKKGLMKKALELYHQMLDAGIFP), 453–487 (DDITRRSLIYGFCRANLVEEAGQVLKETSNRGNGI), 488–522 (RGSTYRLVIQGLCKKKEIEMAIEVVEIMLTGGCKP), and 523–557 (DETIYTAIVKGVEEMGMGSEAVQLQKKLKQWKLLK).

Belongs to the PPR family. P subfamily.

This Arabidopsis thaliana (Mouse-ear cress) protein is Pentatricopeptide repeat-containing protein At1g08610.